A 241-amino-acid polypeptide reads, in one-letter code: Leucyl/phenylalanyl-tRNA--protein transferase (241 aa).

The protein belongs to the L/F-transferase family.

The protein localises to the cytoplasm. The catalysed reaction is N-terminal L-lysyl-[protein] + L-leucyl-tRNA(Leu) = N-terminal L-leucyl-L-lysyl-[protein] + tRNA(Leu) + H(+). It catalyses the reaction N-terminal L-arginyl-[protein] + L-leucyl-tRNA(Leu) = N-terminal L-leucyl-L-arginyl-[protein] + tRNA(Leu) + H(+). It carries out the reaction L-phenylalanyl-tRNA(Phe) + an N-terminal L-alpha-aminoacyl-[protein] = an N-terminal L-phenylalanyl-L-alpha-aminoacyl-[protein] + tRNA(Phe). Its function is as follows. Functions in the N-end rule pathway of protein degradation where it conjugates Leu, Phe and, less efficiently, Met from aminoacyl-tRNAs to the N-termini of proteins containing an N-terminal arginine or lysine. The polypeptide is Leucyl/phenylalanyl-tRNA--protein transferase (Colwellia psychrerythraea (strain 34H / ATCC BAA-681) (Vibrio psychroerythus)).